A 303-amino-acid chain; its full sequence is GGSCGQCRVEVHSGGGDILPTEEGHINKREAKSGCRLACQVAVKQDMEIEVEDEIFGVQQWECEVISNDNKATFIKELKLQIPNGESVPFKAGGYIQIEAPAHHVKYSDFEIDEQYRGDWKHFGFFDVESKVDTDTLRAYSMANYPEEEGIIMLNVRIATPPPGRLHLPAGKMSSYIFSLKAGDKVTISGPFGEFFAKETDNEMVFIGGGAGMAPMRSHIFDQLKRLHSKRKMSFWYGARSKREMFYEDDYNGLAADNDNFQWHVALSDPQPEDNWDGLTGFIHNVLFEEYLKDHEAPEDCEY.

The region spanning Gly-1 to Gln-45 is the 2Fe-2S ferredoxin-type domain. [2Fe-2S] cluster contacts are provided by Cys-4, Cys-7, and Cys-39. In terms of domain architecture, FAD-binding FR-type spans Val-58–Lys-198. A catalytic region spans residues Asp-201 to Tyr-303.

The protein belongs to the NqrF family. As to quaternary structure, composed of six subunits; NqrA, NqrB, NqrC, NqrD, NqrE and NqrF. [2Fe-2S] cluster serves as cofactor. FAD is required as a cofactor.

It is found in the cell inner membrane. It carries out the reaction a ubiquinone + n Na(+)(in) + NADH + H(+) = a ubiquinol + n Na(+)(out) + NAD(+). Functionally, NQR complex catalyzes the reduction of ubiquinone-1 to ubiquinol by two successive reactions, coupled with the transport of Na(+) ions from the cytoplasm to the periplasm. The first step is catalyzed by NqrF, which accepts electrons from NADH and reduces ubiquinone-1 to ubisemiquinone by a one-electron transfer pathway. The sequence is that of Na(+)-translocating NADH-quinone reductase subunit F (nqrF) from Colwellia maris.